The following is an 805-amino-acid chain: Phenylalanine--tRNA ligase beta subunit (805 aa).

The 110-residue stretch at 39 to 148 (APPFTGVVVA…AALRPGTDIR (110 aa)) folds into the tRNA-binding domain. In terms of domain architecture, B5 spans 399 to 474 (PVREPVRMRL…RVYGFERIPD (76 aa)). Positions 452, 458, 461, and 462 each coordinate Mg(2+). One can recognise an FDX-ACB domain in the interval 703 to 804 (SRQPAVVRDL…LVAAHNARQR (102 aa)).

Belongs to the phenylalanyl-tRNA synthetase beta subunit family. Type 1 subfamily. Tetramer of two alpha and two beta subunits. Mg(2+) is required as a cofactor.

It is found in the cytoplasm. It carries out the reaction tRNA(Phe) + L-phenylalanine + ATP = L-phenylalanyl-tRNA(Phe) + AMP + diphosphate + H(+). The protein is Phenylalanine--tRNA ligase beta subunit of Bordetella bronchiseptica (strain ATCC BAA-588 / NCTC 13252 / RB50) (Alcaligenes bronchisepticus).